Consider the following 278-residue polypeptide: Truncated FRIGIDA-like protein 1 (278 aa).

A coiled-coil region spans residues 1–36 (MTASETIATAINQIDEKKEKLKKAFDDLQAHRSLLS).

This sequence belongs to the Frigida family.

Its function is as follows. Truncated inactive FRIGIDA-like 1 protein. This chain is Truncated FRIGIDA-like protein 1 (FRL1), found in Arabidopsis thaliana (Mouse-ear cress).